Consider the following 648-residue polypeptide: Leucine-rich repeat transmembrane protein FLRT3 (648 aa).

Positions 1-28 (MSTETWNLFVAWAQLLLLFRISPQYVNA) are cleaved as a signal peptide. At 29–527 (KPCPSVCRCD…KEPYKNSSLP (499 aa)) the chain is on the extracellular side. The LRRNT domain maps to 30–62 (PCPSVCRCDGGFIYCNDRDLTSIPSGIPDDATT). Intrachain disulfides connect C31–C37 and C35–C44. 10 LRR repeats span residues 58 to 82 (DDAT…LRGL), 83 to 105 (DKVE…LPKN), 107 to 126 (KELH…ALSQ), 127 to 152 (IPSI…AFRD), 154 to 179 (IFLR…TIEE), 181 to 197 (RLDD…SLQD), 198 to 223 (LTNL…VFMN), 225 to 246 (INLT…NLPG), 247 to 269 (TNLR…AFAD), and 270 to 293 (LTQL…IFDD). N226 carries an N-linked (GlcNAc...) asparagine glycan. The region spanning 305-356 (NPWYCGCKMKWVRDWLQSLPSKVNVRGLMCQAPERVRGMTIKDLNKELFDCK) is the LRRCT domain. C309 and C334 are oxidised to a cystine. Residues 409-503 (KIITIQVKSI…VCIETETAPL (95 aa)) form the Fibronectin type-III domain. Residues 528–548 (LAAIIGGAVALVAITLLALVC) traverse the membrane as a helical segment. Residues 549-648 (WYVHRNGSLF…GIPDSDHSHS (100 aa)) are Cytoplasmic-facing. The span at 624-633 (NSHSESSSNR) shows a compositional bias: low complexity. The segment at 624-648 (NSHSESSSNRSYRDSGIPDSDHSHS) is disordered.

In terms of assembly, interacts with fgfr1 and fgfr4. Interacts with rnd1, cdh1 and pcdh8. Interacts (via extracellular domain) with unc5b and unc5d (via extracellular domain). N-glycosylated. In terms of processing, proteolytic cleavage in the juxtamembrane region gives rise to a soluble ectodomain. Cleavage is probably effected by a metalloprotease.

It is found in the cell membrane. The protein resides in the endoplasmic reticulum membrane. It localises to the cell junction. Its subcellular location is the focal adhesion. The protein localises to the secreted. It is found in the cell projection. The protein resides in the axon. It localises to the growth cone membrane. Functions in cell-cell adhesion, cell migration and axon guidance, exerting an attractive or repulsive role depending on its interaction partners. Modulates cadherin-dependent cell-cell adhesion and cell sorting. Plays a role in the spatial organization of brain neurons. Plays a role in vascular development. Plays a role in cell-cell adhesion via its interaction with latrophilins that are expressed at the surface of adjacent cells. Mediates axon attraction towards cells expressing ntn1. mediates axon growth cone collapse and plays a repulsive role in neuron guidance via its interaction with unc-5 family members. Plays a role in the regulation of the density of glutamaergic synapses. Plays a role in signaling cascades downstream of fgfr1, and possibly also other fgfr family members. Plays a role in embryonic morphogenesis, but not in embryonic patterning. The polypeptide is Leucine-rich repeat transmembrane protein FLRT3 (Xenopus tropicalis (Western clawed frog)).